Reading from the N-terminus, the 322-residue chain is GTP 3',8-cyclase (322 aa).

The Radical SAM core domain occupies 4 to 229 (NFNRNIDYLR…IPVQMKKSGP (226 aa)). Position 13 (R13) interacts with GTP. Positions 20 and 24 each coordinate [4Fe-4S] cluster. S-adenosyl-L-methionine is bound at residue Y26. Position 27 (C27) interacts with [4Fe-4S] cluster. R64 provides a ligand contact to GTP. G68 lines the S-adenosyl-L-methionine pocket. T95 is a binding site for GTP. An S-adenosyl-L-methionine-binding site is contributed by S119. K156 is a GTP binding site. M190 is a binding site for S-adenosyl-L-methionine. C253 and C256 together coordinate [4Fe-4S] cluster. Position 258–260 (258–260 (RLR)) interacts with GTP. Position 270 (C270) interacts with [4Fe-4S] cluster.

This sequence belongs to the radical SAM superfamily. MoaA family. As to quaternary structure, monomer and homodimer. Requires [4Fe-4S] cluster as cofactor.

The enzyme catalyses GTP + AH2 + S-adenosyl-L-methionine = (8S)-3',8-cyclo-7,8-dihydroguanosine 5'-triphosphate + 5'-deoxyadenosine + L-methionine + A + H(+). It participates in cofactor biosynthesis; molybdopterin biosynthesis. Catalyzes the cyclization of GTP to (8S)-3',8-cyclo-7,8-dihydroguanosine 5'-triphosphate. This is GTP 3',8-cyclase from Thermodesulfovibrio yellowstonii (strain ATCC 51303 / DSM 11347 / YP87).